The primary structure comprises 179 residues: Natural killer cells antigen CD94 (179 aa).

The Cytoplasmic portion of the chain corresponds to methionine 1–arginine 10. The chain crosses the membrane as a helical; Signal-anchor for type II membrane protein span at residues leucine 11–leucine 31. The Extracellular portion of the chain corresponds to lysine 32 to isoleucine 179. Intrachain disulfides connect cysteine 58-cysteine 70 and cysteine 61-cysteine 72. The C-type lectin domain maps to tyrosine 68–lysine 175. N-linked (GlcNAc...) asparagine glycosylation is found at asparagine 83 and asparagine 132. Disulfide bonds link cysteine 89–cysteine 174 and cysteine 152–cysteine 166.

Can form disulfide-bonded heterodimer with NKG2 family members KLRC1 and KLRC2. KLRD1-KLRC1 heterodimer interacts with peptide-bound MHC-E-B2M heterotrimeric complex. KLRD1 plays a prominent role in directly interacting with MHC-E. KLRD1-KLRC1 interacts with much higher affinity with peptide-bound MHC-E-B2M than KLRD1-KLRC2. Interacts with the adapter protein TYROBP/DAP12; this interaction is required for cell surface expression and cell activation. In terms of tissue distribution, natural killer cells.

It localises to the cell membrane. In terms of biological role, immune receptor involved in self-nonself discrimination. In complex with KLRC1 or KLRC2 on cytotoxic and regulatory lymphocyte subsets, recognizes non-classical major histocompatibility (MHC) class Ib molecule MHC-E loaded with self-peptides derived from the signal sequence of classical MHC class Ia and non-classical MHC class Ib molecules. Enables cytotoxic cells to monitor the expression of MHC class I molecules in healthy cells and to tolerate self. Primarily functions as a ligand binding subunit as it lacks the capacity to signal. KLRD1-KLRC1 acts as an immune inhibitory receptor. Key inhibitory receptor on natural killer (NK) cells that regulates their activation and effector functions. Dominantly counteracts T cell receptor signaling on a subset of memory/effector CD8-positive T cells as part of an antigen-driven response to avoid autoimmunity. On intraepithelial CD8-positive gamma-delta regulatory T cells triggers TGFB1 secretion, which in turn limits the cytotoxic programming of intraepithelial CD8-positive alpha-beta T cells, distinguishing harmless from pathogenic antigens. In MHC-E-rich tumor microenvironment, acts as an immune inhibitory checkpoint and may contribute to progressive loss of effector functions of NK cells and tumor-specific T cells, a state known as cell exhaustion. Upon MHC-E-peptide binding, transmits intracellular signals through KLRC1 immunoreceptor tyrosine-based inhibition motifs (ITIMs) by recruiting INPP5D/SHIP-1 and INPPL1/SHIP-2 tyrosine phosphatases to ITIMs, and ultimately opposing signals transmitted by activating receptors through dephosphorylation of proximal signaling molecules. Its function is as follows. KLRD1-KLRC2 acts as an immune activating receptor. On cytotoxic lymphocyte subsets recognizes MHC-E loaded with signal sequence-derived peptides from non-classical MHC class Ib MHC-G molecules, likely playing a role in the generation and effector functions of adaptive NK cells and in maternal-fetal tolerance during pregnancy. Regulates the effector functions of terminally differentiated cytotoxic lymphocyte subsets, and in particular may play a role in adaptive NK cell response to viral infection. Upon MHC-E-peptide binding, transmits intracellular signals via the adapter protein TYROBP/DAP12, triggering the phosphorylation of proximal signaling molecules and cell activation. This is Natural killer cells antigen CD94 (KLRD1) from Macaca mulatta (Rhesus macaque).